The primary structure comprises 349 residues: S-adenosylmethionine decarboxylase proenzyme 3 (349 aa).

Catalysis depends on residues Glu-9 and Glu-12. Substrate is bound at residue Glu-68. Ser-69 (schiff-base intermediate with substrate; via pyruvic acid) is an active-site residue. At Ser-69 the chain carries Pyruvic acid (Ser); by autocatalysis. Catalysis depends on Cys-83, which acts as the Proton donor; for catalytic activity. Catalysis depends on proton acceptor; for processing activity residues Ser-235 and His-248. Glu-252 serves as a coordination point for substrate.

Belongs to the eukaryotic AdoMetDC family. The cofactor is pyruvate. Post-translationally, is synthesized initially as an inactive proenzyme. Formation of the active enzyme involves a self-maturation process in which the active site pyruvoyl group is generated from an internal serine residue via an autocatalytic post-translational modification. Two non-identical subunits are generated from the proenzyme in this reaction, and the pyruvate is formed at the N-terminus of the alpha chain, which is derived from the carboxyl end of the proenzyme. The post-translation cleavage follows an unusual pathway, termed non-hydrolytic serinolysis, in which the side chain hydroxyl group of the serine supplies its oxygen atom to form the C-terminus of the beta chain, while the remainder of the serine residue undergoes an oxidative deamination to produce ammonia and the pyruvoyl group blocking the N-terminus of the alpha chain.

The catalysed reaction is S-adenosyl-L-methionine + H(+) = S-adenosyl 3-(methylsulfanyl)propylamine + CO2. Its pathway is amine and polyamine biosynthesis; S-adenosylmethioninamine biosynthesis; S-adenosylmethioninamine from S-adenosyl-L-methionine: step 1/1. In terms of biological role, essential for biosynthesis of the polyamines spermidine and spermine. Essential for polyamine homeostasis, and normal plant embryogenesis, growth and development. The chain is S-adenosylmethionine decarboxylase proenzyme 3 from Arabidopsis thaliana (Mouse-ear cress).